The following is a 593-amino-acid chain: Aspartate--tRNA(Asp/Asn) ligase (593 aa).

E172 serves as a coordination point for L-aspartate. The aspartate stretch occupies residues 196 to 199; sequence QLFK. R218 contacts L-aspartate. Residues 218-220 and Q227 each bind ATP; that span reads RDE. H450 lines the L-aspartate pocket. E484 contributes to the ATP binding site. R491 serves as a coordination point for L-aspartate. 536–539 is a binding site for ATP; sequence GLDR.

Belongs to the class-II aminoacyl-tRNA synthetase family. Type 1 subfamily. As to quaternary structure, homodimer.

The protein resides in the cytoplasm. It catalyses the reaction tRNA(Asx) + L-aspartate + ATP = L-aspartyl-tRNA(Asx) + AMP + diphosphate. Its function is as follows. Aspartyl-tRNA synthetase with relaxed tRNA specificity since it is able to aspartylate not only its cognate tRNA(Asp) but also tRNA(Asn). Reaction proceeds in two steps: L-aspartate is first activated by ATP to form Asp-AMP and then transferred to the acceptor end of tRNA(Asp/Asn). This Nitrosomonas eutropha (strain DSM 101675 / C91 / Nm57) protein is Aspartate--tRNA(Asp/Asn) ligase.